The primary structure comprises 153 residues: Deoxyuridine 5'-triphosphate nucleotidohydrolase (153 aa).

Residues 71-73 (RSG), Asn84, 88-90 (TID), and Lys98 contribute to the substrate site.

It belongs to the dUTPase family. Requires Mg(2+) as cofactor.

The catalysed reaction is dUTP + H2O = dUMP + diphosphate + H(+). Its pathway is pyrimidine metabolism; dUMP biosynthesis; dUMP from dCTP (dUTP route): step 2/2. In terms of biological role, this enzyme is involved in nucleotide metabolism: it produces dUMP, the immediate precursor of thymidine nucleotides and it decreases the intracellular concentration of dUTP so that uracil cannot be incorporated into DNA. This chain is Deoxyuridine 5'-triphosphate nucleotidohydrolase, found in Wolbachia sp. subsp. Drosophila simulans (strain wRi).